A 421-amino-acid polypeptide reads, in one-letter code: Ig-like V-type domain-containing protein FAM187A (421 aa).

The signal sequence occupies residues 1 to 18 (MNLAHTTVLLWAWGSLQA). Residues 19–377 (FEIVEKENIF…VSFSDPETRA (359 aa)) lie on the Extracellular side of the membrane. One can recognise an Ig-like V-type domain in the interval 268-362 (PWLPQVPIQF…IAGFRLGVTS (95 aa)). Cys290 and Cys346 are joined by a disulfide. Asn318 carries N-linked (GlcNAc...) asparagine glycosylation. Residues 378-398 (ALGLILIGYMLITVIFISIHL) form a helical membrane-spanning segment. The Cytoplasmic segment spans residues 399 to 421 (CRCCCYLFRFCPNFSPRLSRPQL).

It belongs to the FAM187 family.

Its subcellular location is the membrane. The protein is Ig-like V-type domain-containing protein FAM187A (FAM187A) of Bos taurus (Bovine).